Here is a 597-residue protein sequence, read N- to C-terminus: Elongation factor 4 (597 aa).

Residues 2–184 enclose the tr-type G domain; that stretch reads KHIRNFSIIA…KIVSAIPAPE (183 aa). Residues 14–19 and 131–134 each bind GTP; these read DHGKST and NKID.

This sequence belongs to the TRAFAC class translation factor GTPase superfamily. Classic translation factor GTPase family. LepA subfamily.

Its subcellular location is the cell inner membrane. It catalyses the reaction GTP + H2O = GDP + phosphate + H(+). Its function is as follows. Required for accurate and efficient protein synthesis under certain stress conditions. May act as a fidelity factor of the translation reaction, by catalyzing a one-codon backward translocation of tRNAs on improperly translocated ribosomes. Back-translocation proceeds from a post-translocation (POST) complex to a pre-translocation (PRE) complex, thus giving elongation factor G a second chance to translocate the tRNAs correctly. Binds to ribosomes in a GTP-dependent manner. This chain is Elongation factor 4, found in Vibrio vulnificus (strain CMCP6).